We begin with the raw amino-acid sequence, 201 residues long: NADH-ubiquinone oxidoreductase chain 6 (201 aa).

The next 5 membrane-spanning stretches (helical) occupy residues 4–24, 28–48, 55–75, 88–108, and 151–171; these read LVLF…VISV, VFSV…LLLL, LLFL…VVMI, FYYA…IFII, and LFIL…ILTL.

This sequence belongs to the complex I subunit 6 family.

The protein resides in the mitochondrion membrane. It carries out the reaction a ubiquinone + NADH + 5 H(+)(in) = a ubiquinol + NAD(+) + 4 H(+)(out). In terms of biological role, core subunit of the mitochondrial membrane respiratory chain NADH dehydrogenase (Complex I) that is believed to belong to the minimal assembly required for catalysis. Complex I functions in the transfer of electrons from NADH to the respiratory chain. The immediate electron acceptor for the enzyme is believed to be ubiquinone. This Cyanidium caldarium (Red alga) protein is NADH-ubiquinone oxidoreductase chain 6 (ND6).